A 908-amino-acid chain; its full sequence is Adhesion G-protein coupled receptor F1 (908 aa).

Positions 1–20 (MRIGLLWLVPLFTLTEGTDG) are cleaved as a signal peptide. The Extracellular segment spans residues 21 to 588 (FLQQKNDGRR…VVPVVKWITY (568 aa)). N-linked (GlcNAc...) asparagine glycans are attached at residues Asn-133, Asn-167, Asn-328, Asn-353, Asn-367, Asn-388, Asn-422, Asn-453, Asn-510, Asn-519, Asn-526, and Asn-551. Positions 147–255 (ERAKVWGTFE…GSFRVFGKAP (109 aa)) constitute an SEA domain. Positions 434–577 (PVTQIQSTRG…SMLMSPFVPS (144 aa)) constitute a GAIN-B domain. 2 disulfides stabilise this stretch: Cys-532-Cys-559 and Cys-547-Cys-561. Positions 532–577 (CVFWDFSQLQWSNAGCQLVNETLDTVLCRCSHLTSFSMLMSPFVPS) are GPS. The segment at 566–574 (SFSMLMSPF) is stachel. A helical membrane pass occupies residues 589–609 (IGLSISIASLILCLIIESLFW). Over 610 to 622 (KQTKRSQTSYTRN) the chain is Cytoplasmic. A helical membrane pass occupies residues 623 to 643 (ICLVNIAVSLLIADVWFIIAA). Residues 644 to 658 (TVDPSVSPSGVCVAA) are Extracellular-facing. Cys-655 and Cys-731 form a disulfide bridge. Residues 659 to 679 (VFFTHFFYLAVFFWMLVLGIL) traverse the membrane as a helical segment. Residues 680–697 (LAYRIILVFHHMALTTMM) lie on the Cytoplasmic side of the membrane. The chain crosses the membrane as a helical span at residues 698-718 (AIGFCLGYGCPLLISIITLAV). At 719-742 (TQPSNSYKRNDVCWLNWSDKSKPL) the chain is on the extracellular side. A glycan (N-linked (GlcNAc...) asparagine) is linked at Asn-734. A helical membrane pass occupies residues 743-763 (LAFVVPALTIVAVNLVVVLLV). The Cytoplasmic portion of the chain corresponds to 764-789 (LRKLWRPAVGERLNQDDKATAIRMGK). Residues 790–810 (SLLVLTPLLGLTWGFGIGTMA) traverse the membrane as a helical segment. Residues 811–818 (NSHNLAWH) lie on the Extracellular side of the membrane. The chain crosses the membrane as a helical span at residues 819-839 (VLFALLNAFQGFFIFCFGILL). The Cytoplasmic portion of the chain corresponds to 840-908 (DTKLRQLLSN…ITLTQFLSTE (69 aa)).

This sequence belongs to the G-protein coupled receptor 2 family. Adhesion G-protein coupled receptor (ADGR) subfamily. As to quaternary structure, heterodimer of 2 chains generated by proteolytic processing; the large extracellular N-terminal fragment and the membrane-bound C-terminal fragment predominantly remain associated and non-covalently linked. In terms of processing, autoproteolytically processed at the GPS region of the GAIN-B domain; this cleavage modulates receptor activity. In terms of tissue distribution, expressed in liver, kidney and adrenal gland. In kidney strong expression in the renal pelvis and the ureter.

It is found in the cell membrane. Its activity is regulated as follows. Forms a heterodimer of 2 chains generated by proteolytic processing that remain associated through non-covalent interactions mediated by the GAIN-B domain. In the inactivated receptor, the Stachel sequence (also named stalk) is embedded in the GAIN-B domain, where it adopts a beta-strand conformation. On activation, the Stachel moves into the 7 transmembrane region and adopts a twisted hook-shaped configuration that forms contacts within the receptor, leading to coupling of a G-alpha protein, which activates signaling. The cleaved GAIN-B and N-terminal domains can then dissociate from the rest of the receptor. In terms of biological role, adhesion G-protein coupled receptor (aGPCR) for N-docosahexaenoylethanolamine (synaptamide), an omega-3 fatty acid lipid highly enriched in the brain. Ligand binding causes a conformation change that triggers signaling via guanine nucleotide-binding proteins (G proteins) and modulates the activity of downstream effectors, such as adenylate cyclase. ADGRF1 is coupled to G(s) G proteins and mediates activation of adenylate cyclase activity. Also able to couple to G(q), G(i) and G(12)/G(13) G proteins; additional evidence is however required to confirm this result in vivo. Involved in the development of neurons and cognitive function. In liver, involved in fat accumulation. This chain is Adhesion G-protein coupled receptor F1, found in Mus musculus (Mouse).